Consider the following 172-residue polypeptide: Chalcone--flavanone isomerase 1 (172 aa).

Residues Thr-2, Asn-67, and Thr-144 each coordinate substrate.

This sequence belongs to the chalcone isomerase family.

It carries out the reaction a chalcone = a flavanone.. It functions in the pathway secondary metabolite biosynthesis; flavonoid biosynthesis. In terms of biological role, catalyzes the intramolecular cyclization of bicyclic chalcones into tricyclic (S)-flavanones. Responsible for the isomerization of 4,2',4',6'-tetrahydroxychalcone (also termed chalcone) into naringenin. The protein is Chalcone--flavanone isomerase 1 (CHI1) of Glycine max (Soybean).